The following is a 142-amino-acid chain: Photosystem II extrinsic protein U (142 aa).

An N-terminal signal peptide occupies residues 1 to 29 (MKGLVRLLTVFSLLLGCWGWLGTTQIAQA).

This sequence belongs to the PsbU family. PSII is composed of 1 copy each of membrane proteins PsbA, PsbB, PsbC, PsbD, PsbE, PsbF, PsbH, PsbI, PsbJ, PsbK, PsbL, PsbM, PsbT, PsbX, PsbY, PsbZ, Psb30/Ycf12, peripheral proteins PsbO, CyanoQ (PsbQ), PsbU, PsbV and a large number of cofactors. It forms dimeric complexes.

Its subcellular location is the cellular thylakoid membrane. One of the extrinsic, lumenal subunits of photosystem II (PSII). PSII is a light-driven water plastoquinone oxidoreductase, using light energy to abstract electrons from H(2)O, generating a proton gradient subsequently used for ATP formation. The extrinsic proteins stabilize the structure of photosystem II oxygen-evolving complex (OEC), the ion environment of oxygen evolution and protect the OEC against heat-induced inactivation. This Trichormus variabilis (strain ATCC 29413 / PCC 7937) (Anabaena variabilis) protein is Photosystem II extrinsic protein U.